Here is a 61-residue protein sequence, read N- to C-terminus: Sec-independent protein translocase protein TatA (61 aa).

The chain crosses the membrane as a helical span at residues 1-21 (MFGIGMPELIVILVIVLVVFG).

The protein belongs to the TatA/E family. In terms of assembly, the Tat system comprises two distinct complexes: a TatABC complex, containing multiple copies of TatA, TatB and TatC subunits, and a separate TatA complex, containing only TatA subunits. Substrates initially bind to the TatABC complex, which probably triggers association of the separate TatA complex to form the active translocon.

It is found in the cell inner membrane. Part of the twin-arginine translocation (Tat) system that transports large folded proteins containing a characteristic twin-arginine motif in their signal peptide across membranes. TatA could form the protein-conducting channel of the Tat system. This chain is Sec-independent protein translocase protein TatA, found in Geobacter metallireducens (strain ATCC 53774 / DSM 7210 / GS-15).